Here is a 363-residue protein sequence, read N- to C-terminus: Probable aminomethyltransferase (363 aa).

Belongs to the GcvT family. The glycine cleavage system is composed of four proteins: P, T, L and H.

The catalysed reaction is N(6)-[(R)-S(8)-aminomethyldihydrolipoyl]-L-lysyl-[protein] + (6S)-5,6,7,8-tetrahydrofolate = N(6)-[(R)-dihydrolipoyl]-L-lysyl-[protein] + (6R)-5,10-methylene-5,6,7,8-tetrahydrofolate + NH4(+). The glycine cleavage system catalyzes the degradation of glycine. In Haloarcula marismortui (strain ATCC 43049 / DSM 3752 / JCM 8966 / VKM B-1809) (Halobacterium marismortui), this protein is Probable aminomethyltransferase.